A 333-amino-acid chain; its full sequence is T-cell surface glycoprotein CD1b-1 (333 aa).

The first 18 residues, 1–18 (MLLLPLLLLAVIVPGGDN), serve as a signal peptide directing secretion. Over 19 to 302 (EDVFQGPTSF…LYWGHPTSTG (284 aa)) the chain is Extracellular. N38, N75, N146, and N258 each carry an N-linked (GlcNAc...) asparagine glycan. 2 disulfides stabilise this stretch: C120–C184 and C224–C279. The Ig-like domain maps to 185-295 (PRYFLSVLDA…LGDQDIVLYW (111 aa)). Residues 303–323 (LIFVAIIVSSLILLICLALWF) form a helical membrane-spanning segment. Residues 324 to 333 (WRRWSYLTIL) lie on the Cytoplasmic side of the membrane. An Internalization signal motif is present at residues 329 to 332 (YLTI).

In terms of assembly, heterodimer with B2M (beta-2-microglobulin). Interacts with saposin C.

Its subcellular location is the cell membrane. It is found in the endosome membrane. The protein resides in the lysosome membrane. Its function is as follows. Antigen-presenting protein that binds self and non-self lipid and glycolipid antigens and presents them to T-cell receptors on natural killer T-cells. In Ovis aries (Sheep), this protein is T-cell surface glycoprotein CD1b-1.